A 108-amino-acid chain; its full sequence is UPF0060 membrane protein YnfA (108 aa).

Topologically, residues 1–5 are periplasmic; that stretch reads MLKTT. A helical transmembrane segment spans residues 6 to 26; sequence LLFFVTALCEIIGCFLTWLWI. Residues 27–30 are Cytoplasmic-facing; that stretch reads KRGA. A helical transmembrane segment spans residues 31 to 51; the sequence is SVWWLLPAAASLALFVWLLTL. Residues 52-60 lie on the Periplasmic side of the membrane; it reads HPAASGRVY. A helical membrane pass occupies residues 61 to 81; it reads AAYGGVYVCTALLWLRVVDGV. Over 82–84 the chain is Cytoplasmic; sequence RLT. Residues 85–105 form a helical membrane-spanning segment; it reads VYDWCGAPIALCGMLIIVVGW. At 106–108 the chain is on the periplasmic side; it reads GRT.

This sequence belongs to the UPF0060 family.

Its subcellular location is the cell inner membrane. This Salmonella dublin (strain CT_02021853) protein is UPF0060 membrane protein YnfA.